The chain runs to 149 residues: ATP synthase epsilon chain (149 aa).

2 stretches are compositionally biased toward basic and acidic residues: residues 99 to 116 (DVERAESAEERAKRRLEE) and 123 to 134 (RETHEAARDRAR). The interval 99–149 (DVERAESAEERAKRRLEEGVQEEERETHEAARDRARNRLRVAMGKVGTRQS) is disordered.

This sequence belongs to the ATPase epsilon chain family. In terms of assembly, F-type ATPases have 2 components, CF(1) - the catalytic core - and CF(0) - the membrane proton channel. CF(1) has five subunits: alpha(3), beta(3), gamma(1), delta(1), epsilon(1). CF(0) has three main subunits: a, b and c.

The protein localises to the cell inner membrane. Its function is as follows. Produces ATP from ADP in the presence of a proton gradient across the membrane. The polypeptide is ATP synthase epsilon chain (Salinibacter ruber (strain DSM 13855 / M31)).